We begin with the raw amino-acid sequence, 99 residues long: Sec-independent protein translocase protein TatA (99 aa).

Residues 1–21 (MIGNLKPLEIVLIIAVILLLF) traverse the membrane as a helical segment. Positions 46 to 99 (AMKKDDAATAAPTTETVADDTVPPQSTTARTIQAAPGDVTSSRPVSEAKPTTQS) are disordered. The span at 53 to 69 (ATAAPTTETVADDTVPP) shows a compositional bias: low complexity. Residues 84–99 (VTSSRPVSEAKPTTQS) show a composition bias toward polar residues.

It belongs to the TatA/E family. In terms of assembly, the Tat system comprises two distinct complexes: a TatABC complex, containing multiple copies of TatA, TatB and TatC subunits, and a separate TatA complex, containing only TatA subunits. Substrates initially bind to the TatABC complex, which probably triggers association of the separate TatA complex to form the active translocon.

The protein resides in the cell membrane. Part of the twin-arginine translocation (Tat) system that transports large folded proteins containing a characteristic twin-arginine motif in their signal peptide across membranes. TatA could form the protein-conducting channel of the Tat system. The chain is Sec-independent protein translocase protein TatA from Streptomyces griseus subsp. griseus (strain JCM 4626 / CBS 651.72 / NBRC 13350 / KCC S-0626 / ISP 5235).